The primary structure comprises 356 residues: MREFTPTTLSEEERQELLGQLRRKEGRWLAWARACQTLLKNGLNPQTLFEATGFEPIQQNQITVAMQVYDSILRQDPPAHVRETYQEWGSDLLYELRELDQEQRSLCAQLALERKLDADQIREVAKATKDFCRLPKQPENFDRHPGDAVAHQCWRLAQERTDLTERSRLIARGLQFAQSAGARALIEALLLDLSGVPSRKPPMLPIYRLETEEDLPRLLPFAGTLPLSSSQIEAIAAVEAEGPFGLVSSPQGQQWLALPGWQAILTAEDPIACLEQIDRLPNAPEGPTEAVVLVVDRADRDWDADHFFLVEQAEGARIQWSPSAIAAPILGRLVLILRPKRVLDEAAIATPWQFEE.

An N-terminal alpha-helix region spans residues 9–192 (LSEEERQELL…RALIEALLLD (184 aa)). The interval 216 to 342 (PRLLPFAGTL…LVLILRPKRV (127 aa)) is C-terminal beta-sheet.

It belongs to the RAF family. As to quaternary structure, homodimer. Forms an RbcL(8)-Raf1(8) complex. Forms complexes of many stoichiometries with RbcL with and without RbcS. RbcX and Raf1 can bind simultaneously to RbcL.

The protein resides in the cytoplasm. Functionally, a major RuBisCO chaperone. Acts after GroEL-GroES chaperonin to fold and/or assemble the large subunit of RuBisCO (ccbL, rbcL). Cooperates with RbcX in RbcL folding, plays the major role in assembly of dimers into RbcL(8)-Raf1(8) intermediate complexes. RbcS replaces Raf1, leading to holoenzyme formation. The Raf1 dimer brackets an RbcL dimer, leading to RbcL(8)-Raf1(8) complex formation. RbcS displaces Raf1, resulting in holoenzyme formation. Probably plays a role in early carboxysome assembly; in its absence CcaA, CcmM, CcmN, RbcL and RbcS colocalize in small patches while the shell proteins CcmK2, CcmK3 and CcmK4 are found diffused in the cytoplasm. In terms of biological role, it has been suggested that Raf1 and RbcX are partially functionally redundant. Other evidence suggests they are antagonistic in mediating RuBisCO assembly. This is RuBisCO accumulation factor 1 from Synechococcus elongatus (strain ATCC 33912 / PCC 7942 / FACHB-805) (Anacystis nidulans R2).